A 308-amino-acid chain; its full sequence is MIRHLLSGADVDAGTANRILDTAAEMATVAGREVKKLPALRGRTVVNLFYEDSTRTRISFEAAAKRLSADVINFSAKGSSVTKGESLKDTALTLQAMGADAVVVRHPASGAPHRLAEWVDGSVVNAGDGTHEHPTQALLDAYTMRSRLGRLAGLSVAVVGDVLHSRVARSNVLLLSTLGAKVTLVGPPPLIPVDIVAALAPGTAVCYDLDAVLPQSDVVMMLRVQRERMNDSYFPSAREYARRYGLDGTRMRRLPEHAIVMHPGPMNRGMEITPEVADSPRSTIVEQVANGVSVRMAVLYLLLGGNNR.

Carbamoyl phosphate contacts are provided by R55 and T56. K83 serves as a coordination point for L-aspartate. Carbamoyl phosphate-binding residues include R105, H133, and Q136. Residues R166 and R223 each contribute to the L-aspartate site. Carbamoyl phosphate contacts are provided by G264 and P265.

Belongs to the aspartate/ornithine carbamoyltransferase superfamily. ATCase family. In terms of assembly, heterododecamer (2C3:3R2) of six catalytic PyrB chains organized as two trimers (C3), and six regulatory PyrI chains organized as three dimers (R2).

It catalyses the reaction carbamoyl phosphate + L-aspartate = N-carbamoyl-L-aspartate + phosphate + H(+). Its pathway is pyrimidine metabolism; UMP biosynthesis via de novo pathway; (S)-dihydroorotate from bicarbonate: step 2/3. Functionally, catalyzes the condensation of carbamoyl phosphate and aspartate to form carbamoyl aspartate and inorganic phosphate, the committed step in the de novo pyrimidine nucleotide biosynthesis pathway. This Salinispora arenicola (strain CNS-205) protein is Aspartate carbamoyltransferase catalytic subunit.